A 181-amino-acid chain; its full sequence is Ribosome-recycling factor (181 aa).

The disordered stretch occupies residues 131–154; the sequence is RRDAMDSVKKEKEMPEDDVRKAEN.

The protein belongs to the RRF family.

It is found in the cytoplasm. In terms of biological role, responsible for the release of ribosomes from messenger RNA at the termination of protein biosynthesis. May increase the efficiency of translation by recycling ribosomes from one round of translation to another. This chain is Ribosome-recycling factor, found in Leuconostoc citreum (strain KM20).